Reading from the N-terminus, the 138-residue chain is Basic phospholipase A2 sistruxin B (138 aa).

Residues Met1–Gly16 form the signal peptide. 7 disulfide bridges follow: Cys42–Cys131, Cys44–Cys60, Cys59–Cys111, Cys65–Cys138, Cys66–Cys104, Cys73–Cys97, and Cys91–Cys102. Tyr43, Gly45, and Gly47 together coordinate Ca(2+). His63 is a catalytic residue. Asp64 serves as a coordination point for Ca(2+). The active site involves Asp105.

In terms of assembly, heterodimer of an acidic subunit and a basic chain. The acidic subunit is non-toxic, without enzymatic activity and comprises 3 peptides that are cross-linked by 7 disulfide bridges. The basic subunit is toxic, has phospholipase A2 activity and is composed of a single chain. Ca(2+) is required as a cofactor. Expressed by the venom gland.

It localises to the secreted. The enzyme catalyses a 1,2-diacyl-sn-glycero-3-phosphocholine + H2O = a 1-acyl-sn-glycero-3-phosphocholine + a fatty acid + H(+). Functionally, snake venom phospholipase A2 (PLA2) that shows presynaptic neurotoxicity. PLA2 catalyzes the calcium-dependent hydrolysis of the 2-acyl groups in 3-sn-phosphoglycerides. The chain is Basic phospholipase A2 sistruxin B from Sistrurus tergeminus (Western massasauga).